Here is a 712-residue protein sequence, read N- to C-terminus: Lactoperoxidase (712 aa).

Positions 1–26 (MRVLLHLPALLASLILLQAAASTTRA) are cleaved as a signal peptide. Residues 27–80 (QTTRTSAISDTVSQAKVQVNKAFLDSRTRLKTAMSSETPTSRQLSEYLKHAKGR) constitute a propeptide that is removed on maturation. Residue Asn-106 is glycosylated (N-linked (GlcNAc...) asparagine). Cys-132 and Cys-145 form a disulfide bridge. Asn-212 is a glycosylation site (N-linked (GlcNAc...) asparagine). Asp-225 contributes to the heme b binding site. The active-site Proton acceptor is His-226. Asp-227 is a Ca(2+) binding site. 2 cysteine pairs are disulfide-bonded: Cys-246-Cys-256 and Cys-250-Cys-274. Thr-301, Phe-303, Asp-305, and Ser-307 together coordinate Ca(2+). At Ser-315 the chain carries Phosphoserine. 2 N-linked (GlcNAc...) asparagine glycosylation sites follow: Asn-322 and Asn-358. A disulfide bond links Cys-354 and Cys-365. Positions 375 and 468 each coordinate heme b. At Tyr-482 the chain carries 3'-nitrotyrosine. 2 cysteine pairs are disulfide-bonded: Cys-573-Cys-630 and Cys-671-Cys-696.

Belongs to the peroxidase family. XPO subfamily. Ca(2+) serves as cofactor. It depends on heme b as a cofactor. Mammary gland, milk and salivary gland. Found in bronchial submucosal glands.

It localises to the secreted. The protein localises to the cytoplasm. It carries out the reaction 2 a phenolic donor + H2O2 = 2 a phenolic radical donor + 2 H2O. The catalysed reaction is thiocyanate + H2O2 + H(+) = hypothiocyanous acid + H2O. The enzyme catalyses iodide + H2O2 = hypoiodite + H2O. Functionally, heme-containing oxidoreductase which catalyzes the conversion of thiocyanate (SCN(-)) into antimicrobial agent hypothiocyanous acid (OSCN(-)) in the presence of hydrogen peroxide (H2O2). Also involved in the conversion of iodide (I(-)) into hypoiodite (IO(-)) in the presence of H2O2. Responsible for the inactivation of a wide range of micro-organisms and hence, important component of defense mechanism. Shows antibacterial properties against Pseudomonas aeruginosa. The lactoperoxidase-SCN(-)-H2O2 system shows antibacterial properties against Burkholderia cepacia and Haemophilus influenzae in vitro. Present in mammary and salivary gland secretions and may contribute to airway host defense against infection. May contribute to maintaining an appropriate H2O2 cellular level, therefore protecting cells from H2O2-caused injuries and inflammation. In Homo sapiens (Human), this protein is Lactoperoxidase.